A 513-amino-acid polypeptide reads, in one-letter code: Membrane-bound transcription factor site-2 protease homolog (513 aa).

The Cytoplasmic portion of the chain corresponds to methionine 1 to tryptophan 60. A helical transmembrane segment spans residues phenylalanine 61–leucine 81. The Lumenal portion of the chain corresponds to glutamine 82–serine 107. The chain crosses the membrane as a helical span at residues leucine 108–glycine 128. Histidine 125 is a binding site for Zn(2+). Residue glutamate 126 is part of the active site. Histidine 129 is a Zn(2+) binding site. Over histidine 129 to glycine 137 the chain is Cytoplasmic. The chain crosses the membrane as a helical span at residues isoleucine 138 to phenylalanine 158. Topologically, residues aspartate 159 to asparagine 182 are lumenal. Residues alanine 183 to phenylalanine 203 form a helical membrane-spanning segment. At tyrosine 204–serine 437 the chain is on the cytoplasmic side. A helical membrane pass occupies residues leucine 438–tyrosine 458. At leucine 459–glutamine 485 the chain is on the lumenal side. Residues valine 486 to glycine 506 traverse the membrane as a helical segment. The Cytoplasmic portion of the chain corresponds to leucine 507–tryptophan 513.

It belongs to the peptidase M50A family. Zn(2+) is required as a cofactor. In terms of tissue distribution, expressed in the vasculature of roots, cotyledons and leaves.

The protein resides in the golgi apparatus membrane. In terms of biological role, metalloprotease that catalyzes the second step (site-2 cleavage) in the proteolytic activation of various factors, after site-1 cleavage. Part of a regulated intramembrane proteolysis (RIP) cascade. After ER stress, cleaves BZIP17 and BZIP28 proteins which function as stress sensors and transducers in ER stress signaling pathway. The N-terminal bZIP component is translocated to the nucleus, where it activates the expression and production of ER chaperones, as well as proteins involved in brassinosteroid (BR) signaling, which is required for stress acclimation and growth. The sequence is that of Membrane-bound transcription factor site-2 protease homolog (S2P) from Arabidopsis thaliana (Mouse-ear cress).